Here is a 29-residue protein sequence, read N- to C-terminus: Frontoxin VI (29 aa).

Cys-3 and Cys-24 form a disulfide bridge.

Expressed by the venom gland.

The protein localises to the secreted. Functionally, binds to muscle nicotinic acetylcholine receptor (nAChR) and inhibit acetylcholine from binding to the receptor, thereby impairing neuromuscular transmission. This Micrurus frontalis (Coral snake) protein is Frontoxin VI.